The primary structure comprises 159 residues: Phosphopantetheine adenylyltransferase (159 aa).

Threonine 9 is a binding site for substrate. Residues 9–10 (TF) and histidine 17 each bind ATP. Residues lysine 41, leucine 73, and arginine 87 each contribute to the substrate site. ATP contacts are provided by residues 88 to 90 (GLR), glutamate 98, and 123 to 129 (YAFLSST).

This sequence belongs to the bacterial CoaD family. As to quaternary structure, homohexamer. Mg(2+) is required as a cofactor.

The protein localises to the cytoplasm. The catalysed reaction is (R)-4'-phosphopantetheine + ATP + H(+) = 3'-dephospho-CoA + diphosphate. It participates in cofactor biosynthesis; coenzyme A biosynthesis; CoA from (R)-pantothenate: step 4/5. Reversibly transfers an adenylyl group from ATP to 4'-phosphopantetheine, yielding dephospho-CoA (dPCoA) and pyrophosphate. The polypeptide is Phosphopantetheine adenylyltransferase (Vibrio campbellii (strain ATCC BAA-1116)).